Reading from the N-terminus, the 398-residue chain is Elongation factor Tu (398 aa).

Residues 10 to 207 (KPHVNIGTIG…TVDEYIPEPE (198 aa)) enclose the tr-type G domain. A G1 region spans residues 19–26 (GHVDHGKT). GTP is bound at residue 19 to 26 (GHVDHGKT). Thr26 is a Mg(2+) binding site. Residues 63 to 67 (GITIN) are G2. Residues 84–87 (DAPG) form a G3 region. Residues 84–88 (DAPGH) and 139–142 (NKVD) each bind GTP. Residues 139–142 (NKVD) are G4. The interval 177-179 (SAL) is G5.

The protein belongs to the TRAFAC class translation factor GTPase superfamily. Classic translation factor GTPase family. EF-Tu/EF-1A subfamily. Monomer.

Its subcellular location is the cytoplasm. The catalysed reaction is GTP + H2O = GDP + phosphate + H(+). Its function is as follows. GTP hydrolase that promotes the GTP-dependent binding of aminoacyl-tRNA to the A-site of ribosomes during protein biosynthesis. The chain is Elongation factor Tu from Streptococcus agalactiae serotype Ia (strain ATCC 27591 / A909 / CDC SS700).